Consider the following 398-residue polypeptide: Acetate kinase (398 aa).

N10 lines the Mg(2+) pocket. K17 contacts ATP. Position 89 (R89) interacts with substrate. D148 serves as the catalytic Proton donor/acceptor. Residues 208–212 (HLGNG), 283–285 (DCR), and 331–335 (GIGEN) contribute to the ATP site. E385 lines the Mg(2+) pocket.

It belongs to the acetokinase family. Homodimer. The cofactor is Mg(2+). Mn(2+) is required as a cofactor.

The protein resides in the cytoplasm. The catalysed reaction is acetate + ATP = acetyl phosphate + ADP. The protein operates within metabolic intermediate biosynthesis; acetyl-CoA biosynthesis; acetyl-CoA from acetate: step 1/2. Functionally, catalyzes the formation of acetyl phosphate from acetate and ATP. Can also catalyze the reverse reaction. The chain is Acetate kinase from Histophilus somni (strain 129Pt) (Haemophilus somnus).